The sequence spans 239 residues: Ubiquinone biosynthesis O-methyltransferase (239 aa).

Residues R45, G64, D85, and M129 each coordinate S-adenosyl-L-methionine.

The protein belongs to the methyltransferase superfamily. UbiG/COQ3 family.

It catalyses the reaction a 3-demethylubiquinol + S-adenosyl-L-methionine = a ubiquinol + S-adenosyl-L-homocysteine + H(+). The catalysed reaction is a 3-(all-trans-polyprenyl)benzene-1,2-diol + S-adenosyl-L-methionine = a 2-methoxy-6-(all-trans-polyprenyl)phenol + S-adenosyl-L-homocysteine + H(+). The protein operates within cofactor biosynthesis; ubiquinone biosynthesis. In terms of biological role, O-methyltransferase that catalyzes the 2 O-methylation steps in the ubiquinone biosynthetic pathway. This Nitrosospira multiformis (strain ATCC 25196 / NCIMB 11849 / C 71) protein is Ubiquinone biosynthesis O-methyltransferase.